A 244-amino-acid polypeptide reads, in one-letter code: MGHKVHPTGIRLGIAKDWNSKWYASKADFAAYLAADLKVREMLRKKLAQAGISKILIERPAKTARVTIHTARPGVVIGKRGEDIEKLRKEVSEMMGVPAHINVTEVRKPELDAQLVAESIAQQLERRIMFRRAMKRSVGNAMRLGALGIKVNVAGRLNGAEIARSEWYREGRVPLHTLRADIDYGFAEASTTYGIIGIKVWIYKGEVFDFSQVGQEKQDDSPRNDRNDRGDRGDRPSRPAREAR.

Residues 39–107 (VREMLRKKLA…PAHINVTEVR (69 aa)) form the KH type-2 domain. A disordered region spans residues 213 to 244 (VGQEKQDDSPRNDRNDRGDRGDRPSRPAREAR). Positions 216 to 244 (EKQDDSPRNDRNDRGDRGDRPSRPAREAR) are enriched in basic and acidic residues.

This sequence belongs to the universal ribosomal protein uS3 family. Part of the 30S ribosomal subunit. Forms a tight complex with proteins S10 and S14.

Binds the lower part of the 30S subunit head. Binds mRNA in the 70S ribosome, positioning it for translation. In Xanthomonas campestris pv. campestris (strain 8004), this protein is Small ribosomal subunit protein uS3.